Reading from the N-terminus, the 271-residue chain is Aspartate/glutamate leucyltransferase (271 aa).

Belongs to the R-transferase family. Bpt subfamily.

Its subcellular location is the cytoplasm. The catalysed reaction is N-terminal L-glutamyl-[protein] + L-leucyl-tRNA(Leu) = N-terminal L-leucyl-L-glutamyl-[protein] + tRNA(Leu) + H(+). The enzyme catalyses N-terminal L-aspartyl-[protein] + L-leucyl-tRNA(Leu) = N-terminal L-leucyl-L-aspartyl-[protein] + tRNA(Leu) + H(+). Functions in the N-end rule pathway of protein degradation where it conjugates Leu from its aminoacyl-tRNA to the N-termini of proteins containing an N-terminal aspartate or glutamate. In Acinetobacter baylyi (strain ATCC 33305 / BD413 / ADP1), this protein is Aspartate/glutamate leucyltransferase.